The chain runs to 250 residues: 5'-nucleotidase SurE (250 aa).

Positions 8, 9, 39, and 91 each coordinate a divalent metal cation.

The protein belongs to the SurE nucleotidase family. A divalent metal cation serves as cofactor.

The protein localises to the cytoplasm. The catalysed reaction is a ribonucleoside 5'-phosphate + H2O = a ribonucleoside + phosphate. Nucleotidase that shows phosphatase activity on nucleoside 5'-monophosphates. In Syntrophotalea carbinolica (strain DSM 2380 / NBRC 103641 / GraBd1) (Pelobacter carbinolicus), this protein is 5'-nucleotidase SurE.